A 157-amino-acid chain; its full sequence is Snaclec A16 (157 aa).

The N-terminal stretch at 1–23 is a signal peptide; sequence MGRLISVSFGLLVVFLSLSGTGA. 3 cysteine pairs are disulfide-bonded: Cys27/Cys38, Cys55/Cys149, and Cys124/Cys141. In terms of domain architecture, C-type lectin spans 34-150; that stretch reads YEGHCYKVFN…CELAYHFICM (117 aa).

The protein belongs to the snaclec family. Heterodimer; disulfide-linked. Expressed by the venom gland.

The protein localises to the secreted. In terms of biological role, interferes with one step of hemostasis (modulation of platelet aggregation, or coagulation cascade, for example). The chain is Snaclec A16 from Macrovipera lebetinus (Levantine viper).